We begin with the raw amino-acid sequence, 88 residues long: Acylphosphatase (88 aa).

The Acylphosphatase-like domain maps to 3–88; it reads RLVALVKGRV…EAGLKGFHVY (86 aa). Residues Arg18 and Asn36 contribute to the active site.

The protein belongs to the acylphosphatase family.

The catalysed reaction is an acyl phosphate + H2O = a carboxylate + phosphate + H(+). This chain is Acylphosphatase (acyP), found in Thermus thermophilus (strain ATCC BAA-163 / DSM 7039 / HB27).